A 299-amino-acid polypeptide reads, in one-letter code: Ribosomal protein L11 methyltransferase (299 aa).

Positions 149, 170, 192, and 234 each coordinate S-adenosyl-L-methionine.

The protein belongs to the methyltransferase superfamily. PrmA family.

The protein resides in the cytoplasm. The enzyme catalyses L-lysyl-[protein] + 3 S-adenosyl-L-methionine = N(6),N(6),N(6)-trimethyl-L-lysyl-[protein] + 3 S-adenosyl-L-homocysteine + 3 H(+). Methylates ribosomal protein L11. The polypeptide is Ribosomal protein L11 methyltransferase (Chromohalobacter salexigens (strain ATCC BAA-138 / DSM 3043 / CIP 106854 / NCIMB 13768 / 1H11)).